A 364-amino-acid polypeptide reads, in one-letter code: Dual-specificity RNA methyltransferase RlmN (364 aa).

Glutamate 91 acts as the Proton acceptor in catalysis. Positions 97–333 constitute a Radical SAM core domain; sequence EDDRGTLCIS…TTTRKTRGDD (237 aa). Cysteines 104 and 338 form a disulfide. [4Fe-4S] cluster-binding residues include cysteine 111, cysteine 115, and cysteine 118. S-adenosyl-L-methionine contacts are provided by residues 164-165, serine 196, 218-220, and asparagine 295; these read GE and SLH. Cysteine 338 acts as the S-methylcysteine intermediate in catalysis.

It belongs to the radical SAM superfamily. RlmN family. [4Fe-4S] cluster serves as cofactor.

The protein resides in the cytoplasm. It catalyses the reaction adenosine(2503) in 23S rRNA + 2 reduced [2Fe-2S]-[ferredoxin] + 2 S-adenosyl-L-methionine = 2-methyladenosine(2503) in 23S rRNA + 5'-deoxyadenosine + L-methionine + 2 oxidized [2Fe-2S]-[ferredoxin] + S-adenosyl-L-homocysteine. The enzyme catalyses adenosine(37) in tRNA + 2 reduced [2Fe-2S]-[ferredoxin] + 2 S-adenosyl-L-methionine = 2-methyladenosine(37) in tRNA + 5'-deoxyadenosine + L-methionine + 2 oxidized [2Fe-2S]-[ferredoxin] + S-adenosyl-L-homocysteine. Its function is as follows. Specifically methylates position 2 of adenine 2503 in 23S rRNA and position 2 of adenine 37 in tRNAs. m2A2503 modification seems to play a crucial role in the proofreading step occurring at the peptidyl transferase center and thus would serve to optimize ribosomal fidelity. This is Dual-specificity RNA methyltransferase RlmN from Dechloromonas aromatica (strain RCB).